The sequence spans 1620 residues: NAD-specific glutamate dehydrogenase (1620 aa).

Lys-851 is an active-site residue.

This sequence belongs to the Glu/Leu/Phe/Val dehydrogenases family. In terms of assembly, homotetramer. Contains disulfide bonds (interchain).

The enzyme catalyses L-glutamate + NAD(+) + H2O = 2-oxoglutarate + NH4(+) + NADH + H(+). Activity subject to allosteric control by arginine and citrate, which function as positive and negative effectors, respectively. In terms of biological role, involved in arginine catabolism by converting L-glutamate, into 2-oxoglutarate, which is then channeled into the tricarboxylic acid cycle. Can also utilize other amino acids of the glutamate family. This Pseudomonas aeruginosa (strain ATCC 15692 / DSM 22644 / CIP 104116 / JCM 14847 / LMG 12228 / 1C / PRS 101 / PAO1) protein is NAD-specific glutamate dehydrogenase (gdhB).